We begin with the raw amino-acid sequence, 221 residues long: Peptide methionine sulfoxide reductase MsrA (221 aa).

The active site involves C54.

Belongs to the MsrA Met sulfoxide reductase family.

It catalyses the reaction L-methionyl-[protein] + [thioredoxin]-disulfide + H2O = L-methionyl-(S)-S-oxide-[protein] + [thioredoxin]-dithiol. The enzyme catalyses [thioredoxin]-disulfide + L-methionine + H2O = L-methionine (S)-S-oxide + [thioredoxin]-dithiol. In terms of biological role, has an important function as a repair enzyme for proteins that have been inactivated by oxidation. Catalyzes the reversible oxidation-reduction of methionine sulfoxide in proteins to methionine. In Methylobacterium sp. (strain 4-46), this protein is Peptide methionine sulfoxide reductase MsrA.